The following is a 331-amino-acid chain: Probable zinc-binding oxidoreductase, mitochondrial (331 aa).

The span at 1 to 29 (MASVTSVPKTGRSVNQDVPATTLTLQTRP) shows a compositional bias: polar residues. The tract at residues 1–34 (MASVTSVPKTGRSVNQDVPATTLTLQTRPTPAPN) is disordered.

This sequence belongs to the zinc-containing alcohol dehydrogenase family. Quinone oxidoreductase subfamily.

It is found in the mitochondrion. The chain is Probable zinc-binding oxidoreductase, mitochondrial from Arthroderma benhamiae (strain ATCC MYA-4681 / CBS 112371) (Trichophyton mentagrophytes).